The primary structure comprises 334 residues: MTTYNLRLKAKDELTPHPSVQYWRKCQVEELFAMPFMELVFKAAQVHREHFDPQAIQLSTLLSIKTGGCPEECEYCPQSARYDTGLEKQVMLDIEEIVEKAKIAKQRGASRFCMGAAWRGPKPKDIKVVSEIIGAVKALGLETCGTFGLLEDGMAEDLKQAGLDYYNHNLDTDPERYSKVVHTRSHDDRMDTLGKVRHAGLKVCCGGIVGMNETRPERAGLIASLANLDPQPESVPINQLIKVEGTPMAEAEDLDWTEFVRTIAVARITMPKSYVRLSAGRTAMSEAMQTLCFIAGANSIFYGEKLLTTCNPEEDADCLLMQKLDLYPLQYQEC.

The 228-residue stretch at 54–281 (QAIQLSTLLS…KSYVRLSAGR (228 aa)) folds into the Radical SAM core domain. Residues C69, C73, and C76 each contribute to the [4Fe-4S] cluster site. The [2Fe-2S] cluster site is built by C113, C144, C204, and R276.

Belongs to the radical SAM superfamily. Biotin synthase family. Homodimer. It depends on [4Fe-4S] cluster as a cofactor. [2Fe-2S] cluster serves as cofactor.

The catalysed reaction is (4R,5S)-dethiobiotin + (sulfur carrier)-SH + 2 reduced [2Fe-2S]-[ferredoxin] + 2 S-adenosyl-L-methionine = (sulfur carrier)-H + biotin + 2 5'-deoxyadenosine + 2 L-methionine + 2 oxidized [2Fe-2S]-[ferredoxin]. The protein operates within cofactor biosynthesis; biotin biosynthesis; biotin from 7,8-diaminononanoate: step 2/2. In terms of biological role, catalyzes the conversion of dethiobiotin (DTB) to biotin by the insertion of a sulfur atom into dethiobiotin via a radical-based mechanism. This Haemophilus ducreyi (strain 35000HP / ATCC 700724) protein is Biotin synthase.